Here is a 623-residue protein sequence, read N- to C-terminus: MQCIAFHQFASSSSLPIWSSIDNRFTPKTSITSISKPKPKLKSKSNLKSRSRSSTCYPIQCTVVDNPSSTITNNSDRRSANYGPPIWSFDFVQSLPIQYKGESYTSRLNKLEKDVKRMLIGVENSLAQLELIDTIQRLGISYRFENEIISILKEKFTNNNNNPNPINYDLYATALQFRLLRQYGFEVPQEIFNNFKNHKTGEFKANISNDIMGALGLYEASFHGKKGESILEEARIFTTKCLKKYKLMSSSNNNNMTLISLLVNHALEMPLQWRITRSEAKWFIEEIYERKQDMNPTLLEFAKLDFNMLQSTYQEELKVLSRWWKDSKLGEKLPFVRDRLVECFLWQVGVRFEPQFSYFRIMDTKLYVLLTIIDDMHDIYGTLEELQLFTNALQRWDLKELDKLPDYMKTAFYFTYNFTNELAFDVLQEHGFVHIEYFKKLMVELCKHHLQEAKWFYSGYKPTLQEYVENGWLSVGGQVILMHAYFAFTNPVTKEALECLKDGHPNIVRHASIILRLADDLGTLSDELKRGDVPKSIQCYMHDTGASEDEAREHIKYLISESWKEMNNEDGNINSFFSNEFVQVKQNLGRASQMIYQYGDGHASQNNLSKERVLGLIITPIPM.

Residues 1–60 (MQCIAFHQFASSSSLPIWSSIDNRFTPKTSITSISKPKPKLKSKSNLKSRSRSSTCYPIQ) constitute a chloroplast transit peptide. The tract at residues 29–52 (TSITSISKPKPKLKSKSNLKSRSR) is disordered. The segment covering 37–51 (PKPKLKSKSNLKSRS) has biased composition (basic residues). 5 residues coordinate (2E)-geranyl diphosphate: Arg337, Asp374, Asp378, Arg516, and Asp519. Mg(2+) contacts are provided by Asp374 and Asp378. The DDXXD motif signature appears at 374 to 378 (DDMHD). Residues Asp519, Thr523, and Glu527 each contribute to the Mg(2+) site.

It belongs to the terpene synthase family. Tpsb subfamily. The cofactor is Mg(2+). Mn(2+) serves as cofactor. Requires K(+) as cofactor. Trichome.

The protein localises to the plastid. It localises to the chloroplast. It catalyses the reaction (2E)-geranyl diphosphate = (4S)-limonene + diphosphate. The catalysed reaction is (2E)-geranyl diphosphate = terpinolene + diphosphate. It carries out the reaction (2E)-geranyl diphosphate = (1R,5R)-alpha-pinene + diphosphate. The enzyme catalyses (2E)-geranyl diphosphate = (1R,5R)-beta-pinene + diphosphate. It catalyses the reaction (2E)-geranyl diphosphate = beta-myrcene + diphosphate. The catalysed reaction is (2E)-geranyl diphosphate = (4R)-limonene + diphosphate. Its pathway is secondary metabolite biosynthesis; terpenoid biosynthesis. It functions in the pathway terpene metabolism; (4S)-limonene biosynthesis; (4S)-limonene from geranyl diphosphate: step 1/1. Its function is as follows. Involved in monoterpene (C10) olefins biosynthesis, constituants of cannabinoids and terpenoids-rich resins. Catalyzes mainly the conversion of (2E)-geranyl diphosphate to (-)-limonene, and also produces minor products such as (+)-limonene, (+)-alpha-pinene, terpinolene, (+)-beta-pinene and beta-myrcene. The protein is (-)-limonene synthase TPS1, chloroplastic of Cannabis sativa (Hemp).